We begin with the raw amino-acid sequence, 83 residues long: Kappa-theraphotoxin-Cg2b (83 aa).

The N-terminal stretch at 1–21 (MKGSAFAIILGLVVLCACSFA) is a signal peptide. The propeptide occupies 22–53 (EDEQDQFASPNELLRSMFLESRHELIPEVEGR). 3 cysteine pairs are disulfide-bonded: Cys55-Cys69, Cys62-Cys74, and Cys68-Cys78.

It belongs to the neurotoxin 30 (phrixotoxin) family. As to expression, expressed by the venom gland.

It localises to the secreted. Its function is as follows. Probable ion channel inhibitor. This is Kappa-theraphotoxin-Cg2b from Chilobrachys guangxiensis (Chinese earth tiger tarantula).